The chain runs to 675 residues: NADH-ubiquinone oxidoreductase chain 5 (675 aa).

19 consecutive transmembrane segments (helical) span residues 3 to 23, 27 to 47, 75 to 95, 108 to 127, 132 to 154, 177 to 197, 211 to 231, 251 to 271, 284 to 304, 311 to 329, 334 to 354, 380 to 400, 413 to 433, 462 to 482, 519 to 539, 564 to 584, 593 to 613, 624 to 644, and 649 to 669; these read LLPLLFPLLNLFISCILGKFL, VLFVLVINMLFSAIFSFWIFY, FLFDSITSVMLVLVVFVSLLV, HIIRFLGYLSLFTFFMLMLV, FVQLFLGWEGVGLSSYLLINFWY, IYFSLLVIFFFFKSFDFGVVF, FLGFSLNRVDLIVIFLFLGAI, TPVSALIHAATMVTAGVFVLI, LFLVSLIGGLTALFAGTVGLV, VIAYSTCSQLGYMFFACGM, VGLFHLFNHGFFKALLFLGAG, YVAILVGSLSLTGFPFLTGFY, FSINSFFIYWLGVFAAFITSF, SFIFYVLAFLGFLSIFIGFIF, LIPLVFSIVGLFFSLFVYFVI, YFDLLYNNIFVFNLLSSFYLL, LIELFGPLSFVRLINKSSIIF, YIFVVLLGLMFFIKLTSSLFF, and SFFNFGLFICLLSLIIFLSFG.

The protein belongs to the complex I subunit 5 family.

The protein resides in the mitochondrion inner membrane. The enzyme catalyses a ubiquinone + NADH + 5 H(+)(in) = a ubiquinol + NAD(+) + 4 H(+)(out). Its function is as follows. Core subunit of the mitochondrial membrane respiratory chain NADH dehydrogenase (Complex I) that is believed to belong to the minimal assembly required for catalysis. Complex I functions in the transfer of electrons from NADH to the respiratory chain. The immediate electron acceptor for the enzyme is believed to be ubiquinone. In Acanthamoeba castellanii (Amoeba), this protein is NADH-ubiquinone oxidoreductase chain 5 (ND5).